A 247-amino-acid chain; its full sequence is uncharacterized protein (247 aa).

This is an uncharacterized protein from Cryphonectria parasitica (Chestnut blight fungus).